Consider the following 519-residue polypeptide: uncharacterized protein (519 aa).

Transmembrane regions (helical) follow at residues 19–39, 42–62, 87–107, 128–148, 179–199, 220–240, 270–290, 311–331, 345–365, 386–406, 413–433, 475–495, and 496–516; these read FSSS…AIAT, VLVS…DWQI, MNIV…TVSG, LLAA…SLAV, VMMP…GLLA, FYAI…FDIA, LILP…YTGA, VGTS…LLII, WIVG…AWTI, IPMQ…AFST, FGIM…ELLL, LPYA…VGFT, and YSGL…IFAV.

Its subcellular location is the cell membrane. This is an uncharacterized protein from Haemophilus influenzae (strain ATCC 51907 / DSM 11121 / KW20 / Rd).